The following is a 414-amino-acid chain: MKIYLVGGAVRDTLLKQTVVDKDYVVVGSSVEEMLALGYQQVGKDFPVFLHPKTQQEYALARTERKTGYGYQGFSCDANKDVTLSEDLLRRDLTINAIAQDEHGTLTDPFHGIADINAKILRHVSDAFTEDPLRVLRVARFAARFHHLGFTIAPETLQLMTDIANSGELDHLTPERVWQECDKALSSQSPQVFFDVLKQCQALIVLFPEVDALFGVPQPEKWHPEIDTGIHTLMVLEQTSLLSDNKAVRFAALVHDLGKALTPKQDWPKHYGHGQKGLPVIKKLCARIRVPNEYRDLALLVSDQHQNIHNAFELRAETIVKLFDKGDFWRKPQRLTELLLCCHGDLRGRTGFEQSSYPQAEYLLHCYELASNVDVQSIIAAGYQGSQIKSQLQLNRAETINNYKIQYIESKQLH.

The ATP site is built by G8 and R11. 2 residues coordinate CTP: G8 and R11. D21 and D23 together coordinate Mg(2+). 3 residues coordinate ATP: R91, R137, and R140. Residues R91, R137, and R140 each coordinate CTP. An HD domain is found at 228 to 329 (TGIHTLMVLE…VKLFDKGDFW (102 aa)).

It belongs to the tRNA nucleotidyltransferase/poly(A) polymerase family. Bacterial CCA-adding enzyme type 1 subfamily. In terms of assembly, monomer. Can also form homodimers and oligomers. Mg(2+) is required as a cofactor. It depends on Ni(2+) as a cofactor.

It catalyses the reaction a tRNA precursor + 2 CTP + ATP = a tRNA with a 3' CCA end + 3 diphosphate. The enzyme catalyses a tRNA with a 3' CCA end + 2 CTP + ATP = a tRNA with a 3' CCACCA end + 3 diphosphate. Its function is as follows. Catalyzes the addition and repair of the essential 3'-terminal CCA sequence in tRNAs without using a nucleic acid template. Adds these three nucleotides in the order of C, C, and A to the tRNA nucleotide-73, using CTP and ATP as substrates and producing inorganic pyrophosphate. tRNA 3'-terminal CCA addition is required both for tRNA processing and repair. Also involved in tRNA surveillance by mediating tandem CCA addition to generate a CCACCA at the 3' terminus of unstable tRNAs. While stable tRNAs receive only 3'-terminal CCA, unstable tRNAs are marked with CCACCA and rapidly degraded. The sequence is that of Multifunctional CCA protein from Shewanella frigidimarina (strain NCIMB 400).